The primary structure comprises 152 residues: Deoxyuridine 5'-triphosphate nucleotidohydrolase (152 aa).

Residues 71–73 (RSG), N84, 88–90 (LID), and M98 each bind substrate.

It belongs to the dUTPase family. Mg(2+) serves as cofactor.

The enzyme catalyses dUTP + H2O = dUMP + diphosphate + H(+). It functions in the pathway pyrimidine metabolism; dUMP biosynthesis; dUMP from dCTP (dUTP route): step 2/2. Its function is as follows. This enzyme is involved in nucleotide metabolism: it produces dUMP, the immediate precursor of thymidine nucleotides and it decreases the intracellular concentration of dUTP so that uracil cannot be incorporated into DNA. The sequence is that of Deoxyuridine 5'-triphosphate nucleotidohydrolase from Shewanella putrefaciens (strain CN-32 / ATCC BAA-453).